The chain runs to 269 residues: MQESEIQKPKMQEKFKDHLKKYESDEDYISYINRPLGLFNAYINTYVGPDIKTGLALCHGHNHSIEKFKKIKFINYWYLIDGDAYSFPDYICDLTDIKQLEYFPDDFFDCIMSIYCRVVDTDDNLQYFNILDNVKRILKHDGFFISTELERLFFRFMNDDELIRMNNQLIKLTDEDEIKKYINNFNVKLHFGEDTENITEKQKTFIILNHFEFQKNNTIDIKSIILEKIKLVLKRNGYYFVDLIGEYIFFVPIERVTNKKELLKYTNCD.

This is an uncharacterized protein from Acanthamoeba polyphaga (Amoeba).